The primary structure comprises 37 residues: Photosystem I reaction center subunit VIII (37 aa).

A helical membrane pass occupies residues 7–27 (LPSIFVPLVGLVFPAIAMASL).

It belongs to the PsaI family.

The protein resides in the plastid. Its subcellular location is the chloroplast thylakoid membrane. May help in the organization of the PsaL subunit. The chain is Photosystem I reaction center subunit VIII from Populus alba (White poplar).